The chain runs to 86 residues: Progonadoliberin IIB (86 aa).

The N-terminal stretch at 1–24 (MVHICRLFVVMGMLMFLSVQFASS) is a signal peptide. Glutamine 25 carries the post-translational modification Pyrrolidone carboxylic acid. At glycine 34 the chain carries Glycine amide.

This sequence belongs to the GnRH family. As to expression, olfactory bulbs, hypothalamus and telencephalon, midbrain and posterior brain areas.

The protein localises to the secreted. In terms of biological role, stimulates the secretion of gonadotropins. This is Progonadoliberin IIB (gnrh2b) from Carassius auratus (Goldfish).